Consider the following 746-residue polypeptide: Probably inactive copalyl diphosphate synthase 3 (746 aa).

Residues 331–334 (DVND) carry the DXDD motif; degenerated motif.

This sequence belongs to the terpene synthase family. Tpsc subfamily. Mostly expressed in stems, and, at low levels, in roots and leaves, but barely in flowers.

In Isodon rubescens (Rabdosia rubescens), this protein is Probably inactive copalyl diphosphate synthase 3.